The primary structure comprises 339 residues: Methionine import ATP-binding protein MetN 2 (339 aa).

The 240-residue stretch at 2 to 241 (ISFNNVSKVY…PKTKTTQNFV (240 aa)) folds into the ABC transporter domain. Position 38-45 (38-45 (GFSGAGKS)) interacts with ATP.

This sequence belongs to the ABC transporter superfamily. Methionine importer (TC 3.A.1.24) family. In terms of assembly, the complex is composed of two ATP-binding proteins (MetN), two transmembrane proteins (MetI) and a solute-binding protein (MetQ).

The protein localises to the cell membrane. It catalyses the reaction L-methionine(out) + ATP + H2O = L-methionine(in) + ADP + phosphate + H(+). The catalysed reaction is D-methionine(out) + ATP + H2O = D-methionine(in) + ADP + phosphate + H(+). Part of the ABC transporter complex MetNIQ involved in methionine import. Responsible for energy coupling to the transport system. This is Methionine import ATP-binding protein MetN 2 from Bacillus cereus (strain ATCC 10987 / NRS 248).